The following is a 481-amino-acid chain: Ribosomal protein uS12 methylthiotransferase RimO (481 aa).

The 117-residue stretch at methionine 8–aspartate 124 folds into the MTTase N-terminal domain. Positions 17, 53, and 87 each coordinate [4Fe-4S] cluster. The disordered stretch occupies residues proline 148 to alanine 188. The Radical SAM core domain maps to leucine 182–arginine 413. [4Fe-4S] cluster is bound by residues cysteine 196, cysteine 200, and cysteine 203. The region spanning glutamate 415–asparagine 480 is the TRAM domain.

The protein belongs to the methylthiotransferase family. RimO subfamily. The cofactor is [4Fe-4S] cluster.

It localises to the cytoplasm. It carries out the reaction L-aspartate(89)-[ribosomal protein uS12]-hydrogen + (sulfur carrier)-SH + AH2 + 2 S-adenosyl-L-methionine = 3-methylsulfanyl-L-aspartate(89)-[ribosomal protein uS12]-hydrogen + (sulfur carrier)-H + 5'-deoxyadenosine + L-methionine + A + S-adenosyl-L-homocysteine + 2 H(+). Functionally, catalyzes the methylthiolation of an aspartic acid residue of ribosomal protein uS12. This chain is Ribosomal protein uS12 methylthiotransferase RimO, found in Cutibacterium acnes (strain DSM 16379 / KPA171202) (Propionibacterium acnes).